We begin with the raw amino-acid sequence, 475 residues long: MSPKTETKASVGFKAGVKDYRLTYYTPEYQTKDTDILAAFRVTPQPGVPPEEAGAAVAAESSTGTWTTVWTDGLTSLDRYKGRCYDIEPVPGEESQFIAYVAYPLDLFEEGSVTNLFTSIVGNVFGFKALRALRLEDLRIPPAYSKTFQGPPHGIQVERDKLNKYGRPLLGCTIKPKLGLSAKNYGRAVYECLRGGLDFTKDDENVNSQPFMRWRDRFVFCAEAIYKAQAETGEIKGHYLNATAGTCEEMMKRAIFARELGVPIVMHDYLTGGFTANTSLAHYCRDNGLLLHIHRAMHAVIDRQKNHGMHFRVLAKALRMSGGDHIHAGTVVGKLEGERDVTLGFVDLLRDDFIEKDRSRGIYFTQDWVSMPGVLPVASGGIHVWHMPALTEIFGDDSVLQFGGGTLGHPWGNAPGAVANRVALEACVQARNEGRDLAREGNEVIREASKWSPELAAACEIWKEIKFEFEAMDTL.

The propeptide occupies 1–2 (MS). N-acetylproline is present on Pro3. An N6,N6,N6-trimethyllysine modification is found at Lys14. 2 residues coordinate substrate: Asn123 and Thr173. Catalysis depends on Lys175, which acts as the Proton acceptor. Lys177 provides a ligand contact to substrate. Positions 201, 203, and 204 each coordinate Mg(2+). Lys201 bears the N6-carboxylysine mark. His294 serves as the catalytic Proton acceptor. Residues Arg295, His327, and Ser379 each coordinate substrate.

This sequence belongs to the RuBisCO large chain family. Type I subfamily. In terms of assembly, heterohexadecamer of 8 large chains and 8 small chains; disulfide-linked. The disulfide link is formed within the large subunit homodimers. Requires Mg(2+) as cofactor. In terms of processing, the disulfide bond which can form in the large chain dimeric partners within the hexadecamer appears to be associated with oxidative stress and protein turnover.

The protein localises to the plastid. It localises to the chloroplast. It carries out the reaction 2 (2R)-3-phosphoglycerate + 2 H(+) = D-ribulose 1,5-bisphosphate + CO2 + H2O. It catalyses the reaction D-ribulose 1,5-bisphosphate + O2 = 2-phosphoglycolate + (2R)-3-phosphoglycerate + 2 H(+). RuBisCO catalyzes two reactions: the carboxylation of D-ribulose 1,5-bisphosphate, the primary event in carbon dioxide fixation, as well as the oxidative fragmentation of the pentose substrate in the photorespiration process. Both reactions occur simultaneously and in competition at the same active site. This chain is Ribulose bisphosphate carboxylase large chain, found in Picea sitchensis (Sitka spruce).